The sequence spans 493 residues: Cytochrome P450 2E1 (493 aa).

298-303 (FAGTET) serves as a coordination point for substrate. C437 is a binding site for heme.

The protein belongs to the cytochrome P450 family. As to quaternary structure, interacts with chaperones HSP70 and HSP90; this interaction is required for initial targeting to mitochondria. Heme is required as a cofactor.

Its subcellular location is the endoplasmic reticulum membrane. The protein resides in the microsome membrane. It localises to the mitochondrion inner membrane. The enzyme catalyses an organic molecule + reduced [NADPH--hemoprotein reductase] + O2 = an alcohol + oxidized [NADPH--hemoprotein reductase] + H2O + H(+). It catalyses the reaction (5Z,8Z,11Z)-eicosatrienoate + reduced [NADPH--hemoprotein reductase] + O2 = 19-hydroxy-(5Z,8Z,11Z)-eicosatrienoate + oxidized [NADPH--hemoprotein reductase] + H2O + H(+). The catalysed reaction is (5Z,8Z,11Z,14Z,17Z)-eicosapentaenoate + reduced [NADPH--hemoprotein reductase] + O2 = 19-hydroxy-(5Z,8Z,11Z,14Z,17Z)-eicosapentaenoate + oxidized [NADPH--hemoprotein reductase] + H2O + H(+). It carries out the reaction (4Z,7Z,10Z,13Z,16Z,19Z)-docosahexaenoate + reduced [NADPH--hemoprotein reductase] + O2 = 21-hydroxy-(4Z,7Z,10Z,13Z,16Z,19Z)-docosahexaenoate + oxidized [NADPH--hemoprotein reductase] + H2O + H(+). The enzyme catalyses dodecanoate + reduced [NADPH--hemoprotein reductase] + O2 = 11-hydroxydodecanoate + oxidized [NADPH--hemoprotein reductase] + H2O + H(+). It catalyses the reaction tetradecanoate + reduced [NADPH--hemoprotein reductase] + O2 = 13-hydroxytetradecanoate + oxidized [NADPH--hemoprotein reductase] + H2O + H(+). The catalysed reaction is 4-nitrophenol + NADPH + O2 + H(+) = 4-nitrocatechol + NADP(+) + H2O. Its pathway is lipid metabolism; fatty acid metabolism. With respect to regulation, the omega-1 hydroxylase activity is stimulated by cytochrome b5. A cytochrome P450 monooxygenase involved in the metabolism of fatty acids. Mechanistically, uses molecular oxygen inserting one oxygen atom into a substrate, and reducing the second into a water molecule, with two electrons provided by NADPH via cytochrome P450 reductase (NADPH--hemoprotein reductase). Catalyzes the hydroxylation of carbon-hydrogen bonds. Hydroxylates fatty acids specifically at the omega-1 position displaying the highest catalytic activity for saturated fatty acids. May be involved in the oxidative metabolism of xenobiotics. This Macaca mulatta (Rhesus macaque) protein is Cytochrome P450 2E1 (CYP2E1).